A 163-amino-acid polypeptide reads, in one-letter code: ATP synthase subunit b', chloroplastic (163 aa).

A helical membrane pass occupies residues 26–46 (ATLPLMALQFILLTVILTFVF).

It belongs to the ATPase B chain family. As to quaternary structure, F-type ATPases have 2 components, F(1) - the catalytic core - and F(0) - the membrane proton channel. F(1) has five subunits: alpha(3), beta(3), gamma(1), delta(1), epsilon(1). F(0) has four main subunits: a(1), b(1), b'(1) and c(10-14). The alpha and beta chains form an alternating ring which encloses part of the gamma chain. F(1) is attached to F(0) by a central stalk formed by the gamma and epsilon chains, while a peripheral stalk is formed by the delta, b and b' chains.

The protein resides in the plastid. It is found in the chloroplast thylakoid membrane. In terms of biological role, f(1)F(0) ATP synthase produces ATP from ADP in the presence of a proton or sodium gradient. F-type ATPases consist of two structural domains, F(1) containing the extramembraneous catalytic core and F(0) containing the membrane proton channel, linked together by a central stalk and a peripheral stalk. During catalysis, ATP synthesis in the catalytic domain of F(1) is coupled via a rotary mechanism of the central stalk subunits to proton translocation. Component of the F(0) channel, it forms part of the peripheral stalk, linking F(1) to F(0). The b'-subunit is a diverged and duplicated form of b found in plants and photosynthetic bacteria. This Ochrosphaera neapolitana protein is ATP synthase subunit b', chloroplastic.